We begin with the raw amino-acid sequence, 1551 residues long: UDP-glucose:glycoprotein glucosyltransferase 1 (1551 aa).

A signal peptide spans 1 to 42 (MCSRGDANTADAAAARRVTGLRYNMRLLIALALPCLFSLAEA). N-linked (GlcNAc...) asparagine glycosylation is found at Asn269, Asn536, and Asn1228. The glucosyltransferase stretch occupies residues 1244-1551 (KAEEVKQDKD…QEGSQKHEEL (308 aa)). Residue Ser1277 is modified to Phosphoserine. The interval 1531 to 1551 (KELGTLHTEETQEGSQKHEEL) is disordered. A Prevents secretion from ER motif is present at residues 1548 to 1551 (HEEL).

This sequence belongs to the glycosyltransferase 8 family. As to quaternary structure, monomer as well as in a tight complex with SELENOF. Interacts with METTL23. Part of a large chaperone multiprotein complex comprising DNAJB11, HSP90B1, HSPA5, HYOU, PDIA2, PDIA4, PDIA6, PPIB, SDF2L1, UGGT1 and very small amounts of ERP29, but not, or at very low levels, CALR nor CANX. It depends on Ca(2+) as a cofactor. Mn(2+) is required as a cofactor.

Its subcellular location is the endoplasmic reticulum lumen. The protein resides in the endoplasmic reticulum-Golgi intermediate compartment. It carries out the reaction N(4)-(alpha-D-Man-(1-&gt;2)-alpha-D-Man-(1-&gt;2)-alpha-D-Man-(1-&gt;3)-[alpha-D-Man-(1-&gt;2)-alpha-D-Man-(1-&gt;3)-[alpha-D-Man-(1-&gt;2)-alpha-D-Man-(1-&gt;6)]-alpha-D-Man-(1-&gt;6)]-beta-D-Man-(1-&gt;4)-beta-D-GlcNAc-(1-&gt;4)-beta-D-GlcNAc)-L-asparaginyl-[protein] (N-glucan mannose isomer 9A1,2,3B1,2,3) + UDP-alpha-D-glucose = N(4)-(alpha-D-Glc-(1-&gt;3)-alpha-D-Man-(1-&gt;2)-alpha-D-Man-(1-&gt;2)-alpha-D-Man-(1-&gt;3)-[alpha-D-Man-(1-&gt;2)-alpha-D-Man-(1-&gt;3)-[alpha-D-Man-(1-&gt;2)-alpha-D-Man-(1-&gt;6)]-alpha-D-Man-(1-&gt;6)]-beta-D-Man-(1-&gt;4)-beta-D-GlcNAc-(1-&gt;4)-beta-D-GlcNAc)-L-asparaginyl-[protein] + UDP + H(+). Its pathway is protein modification; protein glycosylation. In terms of biological role, recognizes glycoproteins with minor folding defects. Reglucosylates single N-glycans near the misfolded part of the protein, thus providing quality control for protein folding in the endoplasmic reticulum. Reglucosylated proteins are recognized by calreticulin for recycling to the endoplasmic reticulum and refolding or degradation. The polypeptide is UDP-glucose:glycoprotein glucosyltransferase 1 (Uggt1) (Mus musculus (Mouse)).